Here is a 286-residue protein sequence, read N- to C-terminus: Energy-coupling factor transporter ATP-binding protein EcfA2 (286 aa).

Residues 3-246 form the ABC transporter domain; that stretch reads IRFDNVSYTY…KEKLADWHIG (244 aa). Position 40–47 (40–47) interacts with ATP; sequence GQTGSGKS.

The protein belongs to the ABC transporter superfamily. Energy-coupling factor EcfA family. Forms a stable energy-coupling factor (ECF) transporter complex composed of 2 membrane-embedded substrate-binding proteins (S component), 2 ATP-binding proteins (A component) and 2 transmembrane proteins (T component).

Its subcellular location is the cell membrane. In terms of biological role, ATP-binding (A) component of a common energy-coupling factor (ECF) ABC-transporter complex. Unlike classic ABC transporters this ECF transporter provides the energy necessary to transport a number of different substrates. The sequence is that of Energy-coupling factor transporter ATP-binding protein EcfA2 from Staphylococcus aureus (strain MRSA252).